A 145-amino-acid polypeptide reads, in one-letter code: Large ribosomal subunit protein uL15 (145 aa).

The disordered stretch occupies residues 23–51; that stretch reads IGSGWGKTGGRGHKGQKSRSGGKIRKSFE. Residues 32-47 are compositionally biased toward basic residues; that stretch reads GRGHKGQKSRSGGKIR.

This sequence belongs to the universal ribosomal protein uL15 family. In terms of assembly, part of the 50S ribosomal subunit.

Binds to the 23S rRNA. This is Large ribosomal subunit protein uL15 from Buchnera aphidicola subsp. Cinara cedri (strain Cc).